We begin with the raw amino-acid sequence, 434 residues long: Na(+)/H(+) antiporter NhaA 1 (434 aa).

A compositionally biased stretch (pro residues) spans Met-1 to Pro-15. The interval Met-1–Gly-21 is disordered. The next 12 membrane-spanning stretches (helical) occupy residues Gly-34–Ala-54, Leu-74–Leu-94, Ala-112–Ile-132, Gly-143–Gly-163, Phe-173–Tyr-193, Gly-196–Val-216, Ala-222–Ile-242, Thr-245–Val-265, Ile-294–Leu-314, Ile-326–Ala-346, Val-362–Leu-382, and Ala-393–Leu-413.

This sequence belongs to the NhaA Na(+)/H(+) (TC 2.A.33) antiporter family.

It localises to the cell membrane. It catalyses the reaction Na(+)(in) + 2 H(+)(out) = Na(+)(out) + 2 H(+)(in). Na(+)/H(+) antiporter that extrudes sodium in exchange for external protons. The chain is Na(+)/H(+) antiporter NhaA 1 from Clavibacter michiganensis subsp. michiganensis (strain NCPPB 382).